The chain runs to 547 residues: MAAKDVKFGNDARVKMLAGVNVLADAVKVTLGPKGRNVVLDKSFGAPTITKDGVSVAREIELEDKFENMGAQMVKEVASKANDAAGDGTTTATVLAQAIVNEGLKAVAAGMNPMDLKRGIDKAVAAVVTELKALSKPCETSKEIEQVGTISANSDSIVGQLIAQAMEKVGKEGVITVEDGTGLEDELDVVEGMQFDRGYLSPYFINKPETATVELDSPFILLVDKKISNIRELLPVLEAVAKAGKPLLIIAEDVEGEALATLVVNTMRGIVKVAAVKAPGFGDRRKAMLQDIAILTAGTVISEEIGMELEKATLEDLGQAKRVVINKDNTTIIDGIGDEAQIKGRVAQIRQQIEESTSDYDKEKLQERVAKLAGGVAVIKVGAATEVEMKEKKDRVEDALHATRAAVEEGIVAGGGVALIRAASKAAASLQGDNEEQNVGIKLALRAMESPLRQIVANAGEEASVVASAVKNGEGNFGYNAGTEQYGDMIAMGILDPTKVTRSALQFAASIAGLMITTEAMVTELPKDDKLDAAAAMGGMGGMGGMM.

ATP contacts are provided by residues 30-33, Lys51, 87-91, Gly415, and Asp496; these read TLGP and DGTTT.

The protein belongs to the chaperonin (HSP60) family. Forms a cylinder of 14 subunits composed of two heptameric rings stacked back-to-back. Interacts with the co-chaperonin GroES.

It is found in the cytoplasm. It catalyses the reaction ATP + H2O + a folded polypeptide = ADP + phosphate + an unfolded polypeptide.. Functionally, together with its co-chaperonin GroES, plays an essential role in assisting protein folding. The GroEL-GroES system forms a nano-cage that allows encapsulation of the non-native substrate proteins and provides a physical environment optimized to promote and accelerate protein folding. The protein is Chaperonin GroEL of Mannheimia succiniciproducens (strain KCTC 0769BP / MBEL55E).